Reading from the N-terminus, the 364-residue chain is tRNA 2-selenouridine synthase (364 aa).

The Rhodanese domain occupies 14-137; sequence LIADTPIIDV…LRQTTIQATI (124 aa). C97 serves as the catalytic S-selanylcysteine intermediate.

Belongs to the SelU family. As to quaternary structure, monomer.

It catalyses the reaction 5-methylaminomethyl-2-thiouridine(34) in tRNA + selenophosphate + (2E)-geranyl diphosphate + H2O + H(+) = 5-methylaminomethyl-2-selenouridine(34) in tRNA + (2E)-thiogeraniol + phosphate + diphosphate. The catalysed reaction is 5-methylaminomethyl-2-thiouridine(34) in tRNA + (2E)-geranyl diphosphate = 5-methylaminomethyl-S-(2E)-geranyl-thiouridine(34) in tRNA + diphosphate. It carries out the reaction 5-methylaminomethyl-S-(2E)-geranyl-thiouridine(34) in tRNA + selenophosphate + H(+) = 5-methylaminomethyl-2-(Se-phospho)selenouridine(34) in tRNA + (2E)-thiogeraniol. The enzyme catalyses 5-methylaminomethyl-2-(Se-phospho)selenouridine(34) in tRNA + H2O = 5-methylaminomethyl-2-selenouridine(34) in tRNA + phosphate. Functionally, involved in the post-transcriptional modification of the uridine at the wobble position (U34) of tRNA(Lys), tRNA(Glu) and tRNA(Gln). Catalyzes the conversion of 2-thiouridine (S2U-RNA) to 2-selenouridine (Se2U-RNA). Acts in a two-step process involving geranylation of 2-thiouridine (S2U) to S-geranyl-2-thiouridine (geS2U) and subsequent selenation of the latter derivative to 2-selenouridine (Se2U) in the tRNA chain. The sequence is that of tRNA 2-selenouridine synthase from Escherichia coli (strain 55989 / EAEC).